A 72-amino-acid chain; its full sequence is SRY-related protein MG42 (72 aa).

Residues 1-69 constitute a DNA-binding region (HMG box); the sequence is VKRPMNAFMV…KHMADYPNYK (69 aa).

It localises to the nucleus. The protein is SRY-related protein MG42 of Tarentola mauritanica (Common wall gecko).